Here is a 905-residue protein sequence, read N- to C-terminus: Protein translocase subunit SecA (905 aa).

ATP-binding positions include Q86, 104–108 (GEGKT), and D499. Zn(2+) is bound by residues C890, C892, C901, and H902.

This sequence belongs to the SecA family. Monomer and homodimer. Part of the essential Sec protein translocation apparatus which comprises SecA, SecYEG and auxiliary proteins SecDF-YajC and YidC. Zn(2+) serves as cofactor.

The protein resides in the cell inner membrane. It localises to the cytoplasm. The enzyme catalyses ATP + H2O + cellular proteinSide 1 = ADP + phosphate + cellular proteinSide 2.. In terms of biological role, part of the Sec protein translocase complex. Interacts with the SecYEG preprotein conducting channel. Has a central role in coupling the hydrolysis of ATP to the transfer of proteins into and across the cell membrane, serving both as a receptor for the preprotein-SecB complex and as an ATP-driven molecular motor driving the stepwise translocation of polypeptide chains across the membrane. This is Protein translocase subunit SecA from Rickettsia typhi (strain ATCC VR-144 / Wilmington).